Here is a 439-residue protein sequence, read N- to C-terminus: Hemagglutinin-esterase (439 aa).

Positions 1-22 (MGSMCIAMAPRTLLLLIGCQLA) are cleaved as a signal peptide. The esterase domain 1 stretch occupies residues 12-132 (TLLLLIGCQL…DNKRWMGNKA (121 aa)). Topologically, residues 23–407 (LGFNEPLNVV…PVCLYDPLPV (385 aa)) are virion surface. The Nucleophile role is filled by serine 45. A disulfide bridge connects residues cysteine 49 and cysteine 70. Asparagine 94, asparagine 152, asparagine 196, asparagine 246, and asparagine 316 each carry an N-linked (GlcNAc...) asparagine; by host glycan. A disulfide bond links cysteine 118 and cysteine 167. Residues 133 to 281 (RFYALVYKKM…GNYKAVSLEY (149 aa)) form a receptor binding region. Intrachain disulfides connect cysteine 202-cysteine 291 and cysteine 210-cysteine 264. Positions 282–395 (LLTIPSKAIC…QCPTAANIEF (114 aa)) are esterase domain 2. Cysteine 322 and cysteine 327 are disulfide-bonded. N-linked (GlcNAc...) asparagine; by host glycosylation is found at asparagine 331 and asparagine 337. Residues aspartate 342 and histidine 345 each act as charge relay system in the active site. N-linked (GlcNAc...) asparagine; by host glycosylation is found at asparagine 360 and asparagine 374. Cysteine 363 and cysteine 387 are disulfide-bonded. A helical transmembrane segment spans residues 408-428 (ILLGVLLGIAVLIIVFLLFYF). Residues 429–439 (MTDSGVRLHEA) lie on the Intravirion side of the membrane.

It belongs to the influenza type C/coronaviruses hemagglutinin-esterase family. In terms of assembly, homodimer; disulfide-linked. Forms a complex with the M protein in the pre-Golgi. Associates then with S-M complex to form a ternary complex S-M-HE. In terms of processing, N-glycosylated in the host RER.

Its subcellular location is the virion membrane. The protein localises to the host cell membrane. It carries out the reaction N-acetyl-9-O-acetylneuraminate + H2O = N-acetylneuraminate + acetate + H(+). The enzyme catalyses N-acetyl-4-O-acetylneuraminate + H2O = N-acetylneuraminate + acetate + H(+). Structural protein that makes short spikes at the surface of the virus. Contains receptor binding and receptor-destroying activities. Mediates de-O-acetylation of N-acetyl-4-O-acetylneuraminic acid, which is probably the receptor determinant recognized by the virus on the surface of erythrocytes and susceptible cells. This receptor-destroying activity is important for virus release as it probably helps preventing self-aggregation and ensures the efficient spread of the progeny virus from cell to cell. May serve as a secondary viral attachment protein for initiating infection, the spike protein being the major one. May become a target for both the humoral and the cellular branches of the immune system. In Puffinosis coronavirus (PV), this protein is Hemagglutinin-esterase.